The primary structure comprises 256 residues: Trypsin CFT-1 (256 aa).

The first 17 residues, 1-17 (MRVTLALVALCLASVAA), serve as a signal peptide directing secretion. Residues 18–24 (LPEKQQR) constitute a propeptide, activation peptide. The Peptidase S1 domain occupies 25 to 256 (IVGGSVTTIE…RFTAWIQANA (232 aa)). A disulfide bond links Cys-55 and Cys-71. Active-site charge relay system residues include His-70 and Asp-115. 2 cysteine pairs are disulfide-bonded: Cys-180–Cys-197 and Cys-209–Cys-233. Residue Ser-213 is the Charge relay system of the active site.

Belongs to the peptidase S1 family.

Its subcellular location is the secreted. It is found in the extracellular space. The catalysed reaction is Preferential cleavage: Arg-|-Xaa, Lys-|-Xaa.. Its function is as follows. Responsible for the activation of delta-endotoxin from Bacillus thuringiensis. The protein is Trypsin CFT-1 of Choristoneura fumiferana (Spruce budworm moth).